Here is a 513-residue protein sequence, read N- to C-terminus: Zinc finger CCCH-type with G patch domain-containing protein (513 aa).

Residues 155–178 (PCSYYLEGECRFDEAKCRFSHGAL) form a C3H1-type zinc finger. Acidic residues predominate over residues 252-261 (DQDEDDELSS). The interval 252–283 (DQDEDDELSSEESNSSMNDNSSDEAESDMDDL) is disordered. Over residues 262 to 271 (EESNSSMNDN) the composition is skewed to low complexity. Acidic residues predominate over residues 272-283 (SSDEAESDMDDL). A G-patch domain is found at 312-358 (TRGIGSKLMEKMGYIHGTGLGSDGRGIVTPVSAQILPQGRSLDACME). Positions 478-495 (VQMQSHKQELATLQAQER) are enriched in polar residues. Positions 478–513 (VQMQSHKQELATLQAQERSLSKEQQTRKSKNKMFEF) are disordered. The segment covering 496–513 (SLSKEQQTRKSKNKMFEF) has biased composition (basic and acidic residues).

Its subcellular location is the nucleus. In terms of biological role, transcription repressor. This chain is Zinc finger CCCH-type with G patch domain-containing protein, found in Drosophila melanogaster (Fruit fly).